The primary structure comprises 243 residues: 4-hydroxy-tetrahydrodipicolinate reductase (243 aa).

NAD(+)-binding positions include 9-14 (GANGKM), 78-80 (GTS), and 104-107 (APNF). His-134 serves as the catalytic Proton donor/acceptor. A (S)-2,3,4,5-tetrahydrodipicolinate-binding site is contributed by His-135. The Proton donor role is filled by Lys-138. Residue 144-145 (GT) coordinates (S)-2,3,4,5-tetrahydrodipicolinate.

This sequence belongs to the DapB family.

The protein localises to the cytoplasm. It carries out the reaction (S)-2,3,4,5-tetrahydrodipicolinate + NAD(+) + H2O = (2S,4S)-4-hydroxy-2,3,4,5-tetrahydrodipicolinate + NADH + H(+). It catalyses the reaction (S)-2,3,4,5-tetrahydrodipicolinate + NADP(+) + H2O = (2S,4S)-4-hydroxy-2,3,4,5-tetrahydrodipicolinate + NADPH + H(+). The protein operates within amino-acid biosynthesis; L-lysine biosynthesis via DAP pathway; (S)-tetrahydrodipicolinate from L-aspartate: step 4/4. In terms of biological role, catalyzes the conversion of 4-hydroxy-tetrahydrodipicolinate (HTPA) to tetrahydrodipicolinate. This chain is 4-hydroxy-tetrahydrodipicolinate reductase, found in Legionella pneumophila (strain Paris).